The primary structure comprises 341 residues: Methionine import ATP-binding protein MetN 1 (341 aa).

An ABC transporter domain is found at I2–V241. ATP is bound at residue G38–S45.

Belongs to the ABC transporter superfamily. Methionine importer (TC 3.A.1.24) family. The complex is composed of two ATP-binding proteins (MetN), two transmembrane proteins (MetI) and a solute-binding protein (MetQ).

The protein localises to the cell membrane. The catalysed reaction is L-methionine(out) + ATP + H2O = L-methionine(in) + ADP + phosphate + H(+). The enzyme catalyses D-methionine(out) + ATP + H2O = D-methionine(in) + ADP + phosphate + H(+). Functionally, part of the ABC transporter complex MetNIQ involved in methionine import. Responsible for energy coupling to the transport system. The polypeptide is Methionine import ATP-binding protein MetN 1 (Staphylococcus aureus (strain Mu50 / ATCC 700699)).